The sequence spans 403 residues: MSHRKFSAPRHGSLGFLPRKRSSRHRGKVKSFPKDDSSKPVHLTAFLGYKAGMTHIVREVDRPGSKVNKKEVVEAVTIVETPPMVIVGIVGYVETPRGLRTFKTIFAEHISDECKRRFYKNWHKSKKKAFTKYCKKWQDADGKKQLERDFSSMKKYCQVIRVIAHTQMRLLPLRQKKAHLMEVQVNGGTVAEKLDWARERLEQQVPVSQVFGQDEMIDVIGVTKGKGYKGVTSRWHTKKLPRKTHRGLRKVACIGAWHPARVAFSVARAGQKGYHHRTEINKKIYKIGQGYLIKDGKLIKNNASTDYDLSDKSINPLGGFVHYGEVTNDFVMLKGCVVGTKKRVLTLRKSLLVQTKRRALEKIDLKFIDTTSKFGHGRFQTVEEKKAFMGPLKKDRIAKEEGA.

A disordered region spans residues 1-38; that stretch reads MSHRKFSAPRHGSLGFLPRKRSSRHRGKVKSFPKDDSS. A Phosphoserine modification is found at serine 13. The span at 18 to 31 shows a compositional bias: basic residues; it reads PRKRSSRHRGKVKS. A Glycyl lysine isopeptide (Lys-Gly) (interchain with G-Cter in SUMO2) cross-link involves residue lysine 39. At lysine 136 the chain carries N6-acetyllysine. Glycyl lysine isopeptide (Lys-Gly) (interchain with G-Cter in SUMO2) cross-links involve residues lysine 224 and lysine 226. Histidine 245 is subject to Tele-methylhistidine. Lysine 286 and lysine 294 each carry N6-acetyllysine; alternate. Residue lysine 286 forms a Glycyl lysine isopeptide (Lys-Gly) (interchain with G-Cter in SUMO2); alternate linkage. Lysine 294 participates in a covalent cross-link: Glycyl lysine isopeptide (Lys-Gly) (interchain with G-Cter in SUMO1); alternate. Serine 304 is subject to Phosphoserine. N6-acetyllysine; alternate is present on lysine 366. Residue lysine 366 forms a Glycyl lysine isopeptide (Lys-Gly) (interchain with G-Cter in SUMO2); alternate linkage. Lysine 373 is subject to N6-acetyllysine. Glycyl lysine isopeptide (Lys-Gly) (interchain with G-Cter in SUMO2) cross-links involve residues lysine 386, lysine 393, and lysine 399.

This sequence belongs to the universal ribosomal protein uL3 family. As to quaternary structure, component of the large ribosomal subunit. Interacts with DHX33. In terms of processing, constitutively monomethylated at His-245 by METTL18. Methylation at His-245 regulates translation elongation by slowing ribosome traversal on tyrosine codons: slower elongation provides enough time for proper folding of synthesized proteins and prevents cellular aggregation of tyrosine-rich proteins It is not required for incorporation of RPL3 into ribosomes.

It is found in the nucleus. It localises to the nucleolus. The protein resides in the cytoplasm. Functionally, component of the large ribosomal subunit. The ribosome is a large ribonucleoprotein complex responsible for the synthesis of proteins in the cell. This is Large ribosomal subunit protein uL3 (RPL3) from Bos taurus (Bovine).